A 544-amino-acid polypeptide reads, in one-letter code: Chaperonin GroEL (544 aa).

ATP is bound by residues Thr30–Pro33, Lys51, Asp87–Thr91, Gly415, and Asp495.

This sequence belongs to the chaperonin (HSP60) family. In terms of assembly, forms a cylinder of 14 subunits composed of two heptameric rings stacked back-to-back. Interacts with the co-chaperonin GroES.

Its subcellular location is the cytoplasm. The enzyme catalyses ATP + H2O + a folded polypeptide = ADP + phosphate + an unfolded polypeptide.. In terms of biological role, together with its co-chaperonin GroES, plays an essential role in assisting protein folding. The GroEL-GroES system forms a nano-cage that allows encapsulation of the non-native substrate proteins and provides a physical environment optimized to promote and accelerate protein folding. This chain is Chaperonin GroEL, found in Neisseria flavescens.